Reading from the N-terminus, the 697-residue chain is Phosphate acetyltransferase (697 aa).

The interval 366–697 is phosphate acetyltransferase; the sequence is MFEHKLLEQA…QSPTEKASAQ (332 aa).

In the N-terminal section; belongs to the CobB/CobQ family. It in the C-terminal section; belongs to the phosphate acetyltransferase and butyryltransferase family. In terms of assembly, homohexamer.

It localises to the cytoplasm. The catalysed reaction is acetyl-CoA + phosphate = acetyl phosphate + CoA. It functions in the pathway metabolic intermediate biosynthesis; acetyl-CoA biosynthesis; acetyl-CoA from acetate: step 2/2. Its function is as follows. Involved in acetate metabolism. This is Phosphate acetyltransferase (pta) from Streptomyces coelicolor (strain ATCC BAA-471 / A3(2) / M145).